We begin with the raw amino-acid sequence, 189 residues long: dCTP deaminase (189 aa).

DCTP is bound by residues 112–117, 136–138, Q157, Y171, and Q181; these read KSTYAR and TLE. E138 acts as the Proton donor/acceptor in catalysis.

Belongs to the dCTP deaminase family. As to quaternary structure, homotrimer.

It catalyses the reaction dCTP + H2O + H(+) = dUTP + NH4(+). It functions in the pathway pyrimidine metabolism; dUMP biosynthesis; dUMP from dCTP (dUTP route): step 1/2. Its function is as follows. Catalyzes the deamination of dCTP to dUTP. The polypeptide is dCTP deaminase (Leptothrix cholodnii (strain ATCC 51168 / LMG 8142 / SP-6) (Leptothrix discophora (strain SP-6))).